The chain runs to 1023 residues: Probable beta-glucosidase E (1023 aa).

The segment at Met-1–Leu-51 is disordered. The Cytoplasmic segment spans residues Met-1–Arg-128. Positions Ser-11–Glu-45 are enriched in basic and acidic residues. The chain crosses the membrane as a helical; Signal-anchor for type II membrane protein span at residues Thr-129–Ser-149. The Extracellular portion of the chain corresponds to Thr-150–Pro-1023. N-linked (GlcNAc...) asparagine glycosylation is found at Asn-199 and Asn-387. Residue Asp-415 is part of the active site. Asn-458 and Asn-497 each carry an N-linked (GlcNAc...) asparagine glycan. 2 disordered regions span residues Trp-485–Gly-515 and Asn-822–Asp-841. The span at Pro-827–Pro-838 shows a compositional bias: low complexity. Asn-848 carries an N-linked (GlcNAc...) asparagine glycan. The disordered stretch occupies residues Ala-873–Ser-909. Asn-964 and Asn-979 each carry an N-linked (GlcNAc...) asparagine glycan.

The protein belongs to the glycosyl hydrolase 3 family.

It localises to the cell membrane. It catalyses the reaction Hydrolysis of terminal, non-reducing beta-D-glucosyl residues with release of beta-D-glucose.. It participates in glycan metabolism; cellulose degradation. Its function is as follows. Beta-glucosidases are one of a number of cellulolytic enzymes involved in the degradation of cellulosic biomass. Catalyzes the last step releasing glucose from the inhibitory cellobiose. The chain is Probable beta-glucosidase E (bglE) from Emericella nidulans (strain FGSC A4 / ATCC 38163 / CBS 112.46 / NRRL 194 / M139) (Aspergillus nidulans).